Consider the following 506-residue polypeptide: Protein nucleotidyltransferase YdiU (506 aa).

ATP contacts are provided by Gly-95, Gly-97, Arg-98, Lys-118, Asp-130, Gly-131, Arg-181, and Arg-188. Residue Asp-257 is the Proton acceptor of the active site. The Mg(2+) site is built by Asn-258 and Asp-267. ATP is bound at residue Asp-267. Positions 487 to 506 (KHYQDAPTPDQRVKQTFCGT) are disordered.

This sequence belongs to the SELO family. Requires Mg(2+) as cofactor. Mn(2+) serves as cofactor.

It catalyses the reaction L-seryl-[protein] + ATP = 3-O-(5'-adenylyl)-L-seryl-[protein] + diphosphate. It carries out the reaction L-threonyl-[protein] + ATP = 3-O-(5'-adenylyl)-L-threonyl-[protein] + diphosphate. The catalysed reaction is L-tyrosyl-[protein] + ATP = O-(5'-adenylyl)-L-tyrosyl-[protein] + diphosphate. The enzyme catalyses L-histidyl-[protein] + UTP = N(tele)-(5'-uridylyl)-L-histidyl-[protein] + diphosphate. It catalyses the reaction L-seryl-[protein] + UTP = O-(5'-uridylyl)-L-seryl-[protein] + diphosphate. It carries out the reaction L-tyrosyl-[protein] + UTP = O-(5'-uridylyl)-L-tyrosyl-[protein] + diphosphate. Its function is as follows. Nucleotidyltransferase involved in the post-translational modification of proteins. It can catalyze the addition of adenosine monophosphate (AMP) or uridine monophosphate (UMP) to a protein, resulting in modifications known as AMPylation and UMPylation. This chain is Protein nucleotidyltransferase YdiU, found in Shewanella denitrificans (strain OS217 / ATCC BAA-1090 / DSM 15013).